The chain runs to 619 residues: Grainyhead-like protein 2 homolog (619 aa).

The interval 1–90 (MSQETDNKRL…KINEGHEDQD (90 aa)) is transcription activation. 3 disordered regions span residues 86–108 (HEDQDKRNCLPANETPSNLSTGE), 125–147 (NDTVESSNREKYTTSLSESPQPA), and 423–444 (EERKQNRKKGKSQAAQAQCNNS). The span at 99–108 (ETPSNLSTGE) shows a compositional bias: polar residues. A Grh/CP2 DB domain is found at 239-477 (ASSTFQYTLE…DLDVQPVLFI (239 aa)).

The protein belongs to the grh/CP2 family. Grainyhead subfamily.

It localises to the nucleus. The protein resides in the membrane. Its function is as follows. Transcription factor playing an important role in primary neurulation and in epithelial development. Binds directly to the consensus DNA sequence 5'-AACCGGTT-3' acting as an activator and repressor on distinct target genes. The chain is Grainyhead-like protein 2 homolog (grhl2) from Xenopus tropicalis (Western clawed frog).